We begin with the raw amino-acid sequence, 429 residues long: MATGKSGGSSAEDLGHHAGYYRLPNTHDARLFYFFFESRGSKGEDDPVVIWLTGGPGCSSELALFYENGPFHIADNMSLVWNDFGWDQESNLIYVDQPTGTGFSYSSNPRDTRHDEAGVSNDLYAFLQAFFTEHPNFAKNDFYITGESYAGHYIPAFASRVYKGNKNSEGIHINLKGFAIGNGLTDPAIQYKAYTDYSLDMGLITKSQFNRINKIVPTCELAIKLCGTSGTISCLGAYVVCNLIFSSIETIIGKKNYYDIRKPCVGSLCYDLSNMEKFLQLKSVRESLGVGDIQFVSCSPTVYQAMLLDWMRNLEVGIPELLENDIKVLIYAGEYDLICNWLGNSRWVNSMEWSGKEAFVSSSEEPFTVDGKEAGILKSYGPLSFLKVHDAGHMVPMDQPKVALEMLMRWTSGNLSNASSSFQRLDFTM.

3 cysteine pairs are disulfide-bonded: Cys-58/Cys-298, Cys-226/Cys-241, and Cys-264/Cys-269. An N-linked (GlcNAc...) asparagine glycan is attached at Asn-76. Ser-148 is a catalytic residue. The active site involves Asp-336. Position 339 (Cys-339) interacts with substrate. Residue His-393 is part of the active site. 2 N-linked (GlcNAc...) asparagine glycosylation sites follow: Asn-414 and Asn-417.

Belongs to the peptidase S10 family. Abundant in germinated embryos composed of leaf, root, and scutellum.

The chain is Serine carboxypeptidase-like (CBP31) from Oryza sativa subsp. japonica (Rice).